A 160-amino-acid polypeptide reads, in one-letter code: Twist-related protein 2 (160 aa).

The interval 1 to 63 (MEEGSSSPVS…GSPSAQSFEE (63 aa)) is disordered. Positions 27–37 (KRFGRKRRYSK) are enriched in basic residues. The 52-residue stretch at 66-117 (SQRILANVRERQRTQSLNEAFAALRKIIPTLPSDKLSKIQTLKLAARYIDFL) folds into the bHLH domain.

As to quaternary structure, efficient DNA binding requires dimerization with another bHLH protein. Forms a heterodimer with TCF3/E12. Also interacts with MEF2C. In terms of tissue distribution, expressed at low levels in sclerotome and dermatome of somites, and in limb buds at 10.5 dpc. Accumulates predominantly in dermatome, prevertebrae and derivatives of branchial arches by 13 dpc. Also expressed near surface of embryo and in chondrogenic cells. In adult, expressed at low levels in skin, bladder, uterus, aorta and heart.

It is found in the nucleus. Its subcellular location is the cytoplasm. Functionally, binds to the E-box consensus sequence 5'-CANNTG-3' as a heterodimer and inhibits transcriptional activation by MYOD1, MYOG, MEF2A and MEF2C. Also represses expression of pro-inflammatory cytokines such as TNFA and IL1B. Involved in postnatal glycogen storage and energy metabolism. Inhibits the premature or ectopic differentiation of preosteoblast cells during osteogenesis, possibly by changing the internal signal transduction response of osteoblasts to external growth factors. This Mus musculus (Mouse) protein is Twist-related protein 2 (Twist2).